We begin with the raw amino-acid sequence, 1551 residues long: Dual oxidase 1 (1551 aa).

The signal sequence occupies residues 1-21 (MAVYSAVAWILLFGVLASLGA). Topologically, residues 22 to 596 (QNPVSWEVQR…YFKGSGFGFG (575 aa)) are extracellular. Positions 26–593 (SWEVQRFDGW…VRDYFKGSGF (568 aa)) are peroxidase-like; mediates peroxidase activity. N-linked (GlcNAc...) asparagine glycosylation is found at Asn94, Asn342, Asn354, Asn461, and Asn534. A helical membrane pass occupies residues 597 to 617 (LTIGTLCCFPLVSLLSAWIVA). The Cytoplasmic portion of the chain corresponds to 618–1044 (RLRMRNFKRL…KRFIENYRRH (427 aa)). EF-hand domains follow at residues 815 to 850 (PQDMFVESMFSLADKDGNGYLSFREFLDILVVFMKG), 851 to 886 (SPEEKSRLMFRMYDFDGNGLISKDEFIRMLRSFIEI), and 895 to 930 (QLAEVVESMFRESGFQDKEELTWEDFHFMLRDHDSD). 9 residues coordinate Ca(2+): Asp828, Asp830, Asn832, Tyr834, Glu839, Asp864, Asp866, Asn868, and Glu875. Residues 956 to 1248 (YISQEKICPS…GSFALIQMPR (293 aa)) form an interaction with TXNDC11 region. Residues 1045-1065 (IGCVAVFYTITGALFLERAYY) form a helical membrane-spanning segment. Over 1066 to 1080 (YAFAAHHSGITDTTR) the chain is Extracellular. A helical membrane pass occupies residues 1081-1101 (VGIILSRGTAASISFMFSYIL). One can recognise a Ferric oxidoreductase domain in the interval 1087-1269 (RGTAASISFM…YVGDKLVSLS (183 aa)). Residues 1102–1136 (LTMCRNLITFLRETFLNRYIPFDAAVDFHRFIAST) are Cytoplasmic-facing. A helical membrane pass occupies residues 1137–1157 (AIILTVLHSAGHVVNVYLFSI). Residues 1158 to 1188 (SPLSVLSCLFPDLFHDDGSEFPQKYYWWFFQ) lie on the Extracellular side of the membrane. A helical membrane pass occupies residues 1189–1209 (TVPGLTGVLLLLALAIMYVFA). The Cytoplasmic portion of the chain corresponds to 1210–1226 (SHHFRRRSFRGFWLTHH). A helical membrane pass occupies residues 1227-1247 (LYIFLYILLIIHGSFALIQMP). Arg1248 is a topological domain (extracellular). A helical transmembrane segment spans residues 1249–1269 (FHIFFLVPAIIYVGDKLVSLS). The FAD-binding FR-type domain maps to 1270 to 1376 (RKKVEISVVK…DGPFGEGHQE (107 aa)). The Cytoplasmic portion of the chain corresponds to 1270-1551 (RKKVEISVVK…THFSHHYENF (282 aa)).

This sequence in the N-terminal section; belongs to the peroxidase family. In terms of assembly, interacts with TXNDC11, TPO and CYBA. Post-translationally, N-glycosylated. As to expression, expressed in thyrocytes (at protein level).

It localises to the apical cell membrane. It catalyses the reaction NADH + O2 + H(+) = H2O2 + NAD(+). The enzyme catalyses NADPH + O2 + H(+) = H2O2 + NADP(+). Its pathway is hormone biosynthesis; thyroid hormone biosynthesis. The NADPH oxidase activity is calcium-dependent. Peroxidase activity is inhibited by aminobenzohydrazide. In terms of biological role, generates hydrogen peroxide which is required for the activity of thyroid peroxidase/TPO and lactoperoxidase/LPO. Plays a role in thyroid hormones synthesis and lactoperoxidase-mediated antimicrobial defense at the surface of mucosa. May have its own peroxidase activity through its N-terminal peroxidase-like domain. This is Dual oxidase 1 (Duox1) from Rattus norvegicus (Rat).